Reading from the N-terminus, the 180-residue chain is Crossover junction endodeoxyribonuclease RuvC (180 aa).

Catalysis depends on residues D7, E66, and D138. Residues D7, E66, and D138 each contribute to the Mg(2+) site.

It belongs to the RuvC family. In terms of assembly, homodimer which binds Holliday junction (HJ) DNA. The HJ becomes 2-fold symmetrical on binding to RuvC with unstacked arms; it has a different conformation from HJ DNA in complex with RuvA. In the full resolvosome a probable DNA-RuvA(4)-RuvB(12)-RuvC(2) complex forms which resolves the HJ. It depends on Mg(2+) as a cofactor.

It is found in the cytoplasm. The enzyme catalyses Endonucleolytic cleavage at a junction such as a reciprocal single-stranded crossover between two homologous DNA duplexes (Holliday junction).. In terms of biological role, the RuvA-RuvB-RuvC complex processes Holliday junction (HJ) DNA during genetic recombination and DNA repair. Endonuclease that resolves HJ intermediates. Cleaves cruciform DNA by making single-stranded nicks across the HJ at symmetrical positions within the homologous arms, yielding a 5'-phosphate and a 3'-hydroxyl group; requires a central core of homology in the junction. The consensus cleavage sequence is 5'-(A/T)TT(C/G)-3'. Cleavage occurs on the 3'-side of the TT dinucleotide at the point of strand exchange. HJ branch migration catalyzed by RuvA-RuvB allows RuvC to scan DNA until it finds its consensus sequence, where it cleaves and resolves the cruciform DNA. The polypeptide is Crossover junction endodeoxyribonuclease RuvC (Paraburkholderia xenovorans (strain LB400)).